The chain runs to 410 residues: NADH-quinone oxidoreductase subunit D (410 aa).

The protein belongs to the complex I 49 kDa subunit family. As to quaternary structure, NDH-1 is composed of 14 different subunits. Subunits NuoB, C, D, E, F, and G constitute the peripheral sector of the complex.

It is found in the cell inner membrane. The catalysed reaction is a quinone + NADH + 5 H(+)(in) = a quinol + NAD(+) + 4 H(+)(out). Its function is as follows. NDH-1 shuttles electrons from NADH, via FMN and iron-sulfur (Fe-S) centers, to quinones in the respiratory chain. The immediate electron acceptor for the enzyme in this species is believed to be ubiquinone. Couples the redox reaction to proton translocation (for every two electrons transferred, four hydrogen ions are translocated across the cytoplasmic membrane), and thus conserves the redox energy in a proton gradient. The protein is NADH-quinone oxidoreductase subunit D of Nitratiruptor sp. (strain SB155-2).